Reading from the N-terminus, the 364-residue chain is sn-glycerol-3-phosphate import ATP-binding protein UgpC (364 aa).

Residues 4–235 form the ABC transporter domain; it reads VVLRNVRKTY…PATTFVASFI (232 aa). 37-44 is a binding site for ATP; that stretch reads GPSGCGKS.

This sequence belongs to the ABC transporter superfamily. sn-glycerol-3-phosphate importer (TC 3.A.1.1.3) family. In terms of assembly, the complex is composed of two ATP-binding proteins (UgpC), two transmembrane proteins (UgpA and UgpE) and a solute-binding protein (UgpB).

It localises to the cell inner membrane. The catalysed reaction is sn-glycerol 3-phosphate(out) + ATP + H2O = sn-glycerol 3-phosphate(in) + ADP + phosphate + H(+). Part of the ABC transporter complex UgpBAEC involved in sn-glycerol-3-phosphate (G3P) import. Responsible for energy coupling to the transport system. The chain is sn-glycerol-3-phosphate import ATP-binding protein UgpC from Rhodopseudomonas palustris (strain BisB5).